A 422-amino-acid chain; its full sequence is Light-independent protochlorophyllide reductase subunit N (422 aa).

The [4Fe-4S] cluster site is built by C26, C51, and C112.

It belongs to the BchN/ChlN family. Protochlorophyllide reductase is composed of three subunits; BchL, BchN and BchB. Forms a heterotetramer of two BchB and two BchN subunits. Requires [4Fe-4S] cluster as cofactor.

The catalysed reaction is chlorophyllide a + oxidized 2[4Fe-4S]-[ferredoxin] + 2 ADP + 2 phosphate = protochlorophyllide a + reduced 2[4Fe-4S]-[ferredoxin] + 2 ATP + 2 H2O. The protein operates within porphyrin-containing compound metabolism; bacteriochlorophyll biosynthesis (light-independent). Component of the dark-operative protochlorophyllide reductase (DPOR) that uses Mg-ATP and reduced ferredoxin to reduce ring D of protochlorophyllide (Pchlide) to form chlorophyllide a (Chlide). This reaction is light-independent. The NB-protein (BchN-BchB) is the catalytic component of the complex. The chain is Light-independent protochlorophyllide reductase subunit N from Acidiphilium rubrum.